The chain runs to 354 residues: Neutral protease 2 homolog AN7962 (354 aa).

A signal peptide spans 1–19 (MKFIAPIALLGMFQAASAS). Residues 20-178 (PVDIKTSNAG…GAQLSKLSKR (159 aa)) constitute a propeptide that is removed on maturation. 2 disulfide bridges follow: cysteine 184-cysteine 255 and cysteine 262-cysteine 280. Histidine 305 serves as a coordination point for Zn(2+). Glutamate 306 is an active-site residue. Zn(2+) contacts are provided by histidine 309 and aspartate 320.

The protein belongs to the peptidase M35 family. It depends on Zn(2+) as a cofactor.

The protein localises to the secreted. It catalyses the reaction Preferential cleavage of bonds with hydrophobic residues in P1'. Also 3-Asn-|-Gln-4 and 8-Gly-|-Ser-9 bonds in insulin B chain.. Secreted metalloproteinase that allows assimilation of proteinaceous substrates. Shows high activities on basic nuclear substrates such as histone and protamine. In Emericella nidulans (strain FGSC A4 / ATCC 38163 / CBS 112.46 / NRRL 194 / M139) (Aspergillus nidulans), this protein is Neutral protease 2 homolog AN7962.